The sequence spans 361 residues: MKTFPLQSLTIIEAQQKQFALVDSICRHFPGSEFLTGGDLGLTPGLNQPRVTQRVEQVLADAFHAQAAALVQGAGTGAIRAGLAALLKPGQRLLVHDAPVYPTTRVIIEQMGLTLITVDFNDLSALKQVVDEQQPDAALVQHTRQQPQDSYVLADVLATLRAAGVPALTDDNYAVMKVARIGCECGANVSTFSCFKLFGPEGVGAVVGDADVINRIRATLYSGGSQIQGAQALEVLRGLVFAPVMHAVQAGVSERLLALLNGGAVPEVKSAVIANAQSKVLIVEFHQPIAARVLEEAQKRGALPYPVGAESKYEIPPLFYRLSGTFRQANPQSEHCAIRINPNRSGEETVLRILRESIASI.

This is an uncharacterized protein from Escherichia coli (strain K12).